The following is a 325-amino-acid chain: Retinal homeobox protein Rx-B (325 aa).

The short motif at 32 to 39 is the Octapeptide motif element; sequence HSIEAILG. Over residues 75-87 the composition is skewed to basic and acidic residues; that stretch reads TEEIHPQQEHLED. The disordered stretch occupies residues 75-136; that stretch reads TEEIHPQQEH…KKKHRRNRTT (62 aa). Polar residues predominate over residues 99-117; that stretch reads AKTSSECLSPGLSTSNSDN. Residues 130 to 189 constitute a DNA-binding region (homeobox); the sequence is HRRNRTTFTTYQLHELERAFEKSHYPDVYSREELAMKVNLPEVRVQVWFQNRRAKWRRQE. An OAR motif is present at residues 302–315; that stretch reads NSIASLRMKAKEHI. The short motif at 308–312 is the Nuclear localization signal element; the sequence is RMKAK.

Belongs to the paired homeobox family. Bicoid subfamily. Highly expressed in anterior neural plate followed by neural retina, pigmented epithelium, in pineal gland, diencephalon floor and epiphysis. At later stages, the neuroretina remains the primary site of expression. No expression in the developing lens and cornea.

It localises to the nucleus. Plays a critical role in eye formation by regulating the initial specification of retinal cells and/or their subsequent proliferation. The polypeptide is Retinal homeobox protein Rx-B (rax-b) (Xenopus laevis (African clawed frog)).